A 192-amino-acid polypeptide reads, in one-letter code: DNA dC-&gt;dU-editing enzyme APOBEC-3Ca (192 aa).

Residues 15–141 (IDPNTFRFHF…PNYQEGLCKL (127 aa)) enclose the CMP/dCMP-type deaminase domain. Residue His69 participates in Zn(2+) binding. Residue Glu71 is the Proton donor of the active site. Residues Cys100 and Cys103 each coordinate Zn(2+).

It belongs to the cytidine and deoxycytidylate deaminase family. As to quaternary structure, (Microbial infection) Interacts with feline foamy virus protein Bet. This interaction does not induce APOBEC3Ca degradation but prevents its dimerization and incorporation into the virion. The cofactor is Zn(2+).

The protein localises to the nucleus. Its subcellular location is the cytoplasm. It carries out the reaction a 2'-deoxycytidine in single-stranded DNA + H2O + H(+) = a 2'-deoxyuridine in single-stranded DNA + NH4(+). Its function is as follows. DNA deaminase (cytidine deaminase) which acts as an inhibitor of retrovirus replication and retrotransposon mobility via deaminase-dependent and -independent mechanisms. Selectively targets single-stranded DNA and does not deaminate double-stranded DNA or single- or double-stranded RNA. Does not reduce infectivity of foamy feline virus, feline immunodeficiency virus or feline leukemia virus. The sequence is that of DNA dC-&gt;dU-editing enzyme APOBEC-3Ca from Felis catus (Cat).